Consider the following 226-residue polypeptide: ATP-dependent dethiobiotin synthetase BioD (226 aa).

12-17 (GVGKTV) provides a ligand contact to ATP. Position 16 (Thr16) interacts with Mg(2+). The active site involves Lys37. Thr41 contacts substrate. ATP-binding positions include Asp49, 108 to 111 (EGAG), and 197 to 199 (PAG). Mg(2+) is bound by residues Asp49 and Glu108.

This sequence belongs to the dethiobiotin synthetase family. As to quaternary structure, homodimer. Mg(2+) serves as cofactor.

Its subcellular location is the cytoplasm. The enzyme catalyses (7R,8S)-7,8-diammoniononanoate + CO2 + ATP = (4R,5S)-dethiobiotin + ADP + phosphate + 3 H(+). It functions in the pathway cofactor biosynthesis; biotin biosynthesis; biotin from 7,8-diaminononanoate: step 1/2. Catalyzes a mechanistically unusual reaction, the ATP-dependent insertion of CO2 between the N7 and N8 nitrogen atoms of 7,8-diaminopelargonic acid (DAPA, also called 7,8-diammoniononanoate) to form a ureido ring. This chain is ATP-dependent dethiobiotin synthetase BioD, found in Mycobacterium avium (strain 104).